A 322-amino-acid chain; its full sequence is tRNA-dihydrouridine synthase B (322 aa).

FMN contacts are provided by residues 16-18 (PMA) and Gln-70. Cys-100 acts as the Proton donor in catalysis. FMN is bound by residues Lys-139, 200-202 (NGD), and 224-225 (GR).

This sequence belongs to the Dus family. DusB subfamily. FMN serves as cofactor.

It catalyses the reaction a 5,6-dihydrouridine in tRNA + NAD(+) = a uridine in tRNA + NADH + H(+). The catalysed reaction is a 5,6-dihydrouridine in tRNA + NADP(+) = a uridine in tRNA + NADPH + H(+). Its function is as follows. Catalyzes the synthesis of 5,6-dihydrouridine (D), a modified base found in the D-loop of most tRNAs, via the reduction of the C5-C6 double bond in target uridines. In Vibrio cholerae serotype O1 (strain ATCC 39315 / El Tor Inaba N16961), this protein is tRNA-dihydrouridine synthase B.